The following is a 160-amino-acid chain: UPF0225 protein PP_1119 (160 aa).

It belongs to the UPF0225 family.

The protein is UPF0225 protein PP_1119 of Pseudomonas putida (strain ATCC 47054 / DSM 6125 / CFBP 8728 / NCIMB 11950 / KT2440).